The following is a 69-amino-acid chain: Large ribosomal subunit protein bL31 (69 aa).

This sequence belongs to the bacterial ribosomal protein bL31 family. Type A subfamily. Part of the 50S ribosomal subunit.

Functionally, binds the 23S rRNA. The chain is Large ribosomal subunit protein bL31 from Magnetococcus marinus (strain ATCC BAA-1437 / JCM 17883 / MC-1).